The sequence spans 326 residues: Chain length determinant protein (326 aa).

Over 1 to 31 the chain is Cytoplasmic; that stretch reads MRVENNNVSGQNHDPEQIDLIDLLVQLWRGK. A helical transmembrane segment spans residues 32 to 52; that stretch reads MTIIISVIVAIALAIGYLAVA. Topologically, residues 53-295 are periplasmic; the sequence is KEKWTSTAII…LPIRRDSPKK (243 aa). Residues 296 to 316 traverse the membrane as a helical segment; it reads AITLILAVLLGGMVGAGIVLG. The Cytoplasmic portion of the chain corresponds to 317–326; that stretch reads RNALRNYNAK.

This sequence belongs to the WzzB/Cld/Rol family. Homodimer.

The protein localises to the cell inner membrane. The protein operates within bacterial outer membrane biogenesis; lipopolysaccharide biosynthesis. Confers a modal distribution of chain length on the O-antigen component of lipopolysaccharide (LPS). Gives rise to a reduced number of short chain molecules and increases in numbers of longer molecules. The polypeptide is Chain length determinant protein (wzzB) (Escherichia coli (strain K12)).